Reading from the N-terminus, the 76-residue chain is Protein A9 homolog (76 aa).

An N-terminal signal peptide occupies residues 1-21 (MSCYSSILNSISTLAFLQVAS). Residues 23–45 (VIELVRHCIMHFCETRIRCNTLA) are Intravirion-facing. Residues 46 to 66 (FVILKILITMVIYFMIGLGLF) traverse the membrane as a helical segment. At 67-76 (YLAKNGTEAE) the chain is on the virion surface side. An N-linked (GlcNAc...) asparagine; by host glycan is attached at asparagine 71.

This sequence belongs to the chordopoxvirinae A9 family.

It localises to the virion membrane. The protein localises to the host cytoplasm. In terms of biological role, envelope protein. Required for an early step in virion morphogenesis. The protein is Protein A9 homolog of Fowlpox virus (strain NVSL) (FPV).